Here is a 200-residue protein sequence, read N- to C-terminus: GTP-binding protein rho2 (200 aa).

15-22 (GDGACGKT) is a binding site for GTP. Residues 37 to 45 (YVPTVFENY) carry the Effector region motif. Residues 62-66 (DTAGQ) and 120-123 (MKAD) each bind GTP. Cysteine 197 is modified (cysteine methyl ester). The S-geranylgeranyl cysteine moiety is linked to residue cysteine 197. The propeptide at 198 to 200 (IIS) is removed in mature form.

This sequence belongs to the small GTPase superfamily. Rho family. As to quaternary structure, interacts with pck2.

Its subcellular location is the cell membrane. In terms of biological role, involved in cell morphogenesis, the maintenance of growth direction, control of polarity and of cell wall integrity. Regulates the synthesis of alpha-D-glucan through activation of pck2. This Schizosaccharomyces pombe (strain 972 / ATCC 24843) (Fission yeast) protein is GTP-binding protein rho2 (rho2).